The following is a 245-amino-acid chain: Epoxyqueuosine reductase QueH (245 aa).

Cys-52, Cys-53, Cys-131, and Cys-134 together coordinate [4Fe-4S] cluster. Cys-214 and Cys-216 form a disulfide bridge.

The protein belongs to the QueH family.

The enzyme catalyses epoxyqueuosine(34) in tRNA + AH2 = queuosine(34) in tRNA + A + H2O. It functions in the pathway tRNA modification; tRNA-queuosine biosynthesis. Its function is as follows. Catalyzes the conversion of epoxyqueuosine (oQ) to queuosine (Q), which is a hypermodified base found in the wobble positions of tRNA(Asp), tRNA(Asn), tRNA(His) and tRNA(Tyr). The protein is Epoxyqueuosine reductase QueH of Haemophilus influenzae (strain ATCC 51907 / DSM 11121 / KW20 / Rd).